We begin with the raw amino-acid sequence, 255 residues long: Small ribosomal subunit protein eS1 (255 aa).

The span at 1–18 (MAVGKNKRLSKGKKGLKK) shows a compositional bias: basic residues. A disordered region spans residues 1–22 (MAVGKNKRLSKGKKGLKKRAQD). Position 2 is an N-acetylalanine; partial (alanine 2).

It belongs to the eukaryotic ribosomal protein eS1 family. Component of the small ribosomal subunit. Mature ribosomes consist of a small (40S) and a large (60S) subunit. The 40S subunit contains about 33 different proteins and 1 molecule of RNA (18S). The 60S subunit contains about 49 different proteins and 3 molecules of RNA (25S, 5.8S and 5S).

Its subcellular location is the cytoplasm. In Uncinocarpus reesii (strain UAMH 1704), this protein is Small ribosomal subunit protein eS1.